The sequence spans 727 residues: Pre-B-cell leukemia transcription factor-interacting protein 1 (727 aa).

The span at 1 to 10 (MASCPDSDNS) shows a compositional bias: polar residues. The tract at residues 1 to 169 (MASCPDSDNS…GREPSSSQPV (169 aa)) is disordered. 4 positions are modified to phosphoserine: serine 131, serine 142, serine 143, and serine 144. A Phosphothreonine modification is found at threonine 148. A Phosphoserine modification is found at serine 164. Coiled-coil stretches lie at residues 270 to 350 (FLLD…RGVD) and 377 to 405 (DPSL…WQLL). Residues 446 to 456 (QGINTGRSPND) are compositionally biased toward polar residues. 2 disordered regions span residues 446–565 (QGIN…NSPD) and 694–727 (LKKR…YHQG). Residues 473–563 (WGGKEKWRGG…QKHSWGKDNS (91 aa)) show a composition bias toward basic and acidic residues. The Nuclear localization signal motif lies at 486 to 506 (QKAEHWKPRKEESGQERQRSW). Phosphoserine is present on serine 563. The Nuclear localization signal signature appears at 691–716 (DKALKKRSRKKEKHSWNPRVVGPREE). The segment covering 694–703 (LKKRSRKKEK) has biased composition (basic residues).

Interacts with ESR1, PBX1, PBX2 and PBX3. Interacts with TEX11.

Its subcellular location is the cytoplasm. The protein localises to the cytoskeleton. It is found in the nucleus. Functionally, regulator of pre-B-cell leukemia transcription factors (BPXs) function. Inhibits the binding of PBX1-HOX complex to DNA and blocks the transcriptional activity of E2A-PBX1. Tethers estrogen receptor-alpha (ESR1) to microtubules and allows them to influence estrogen receptors-alpha signaling. This chain is Pre-B-cell leukemia transcription factor-interacting protein 1 (Pbxip1), found in Mus musculus (Mouse).